Consider the following 276-residue polypeptide: F-box/LRR-repeat protein 20 (276 aa).

Residues 22 to 68 form the F-box domain; it reads AVINKKLPKELLLRIFSFLDVVTLCRCAQVSRAWNVLALDGSNWQRI. LRR repeat units lie at residues 74-100, 101-126, 127-152, 153-178, 179-204, 205-230, 231-256, and 257-276; these read QRDI…SLRG, CLGV…SLNG, CTKT…DLAS, CTSI…NISW, CDQV…FLKG, CTQL…NLQT, CLQI…CASG, and CSNI…PRLR.

In terms of assembly, interacts with SKP1 and CUL1. In terms of tissue distribution, widely expressed, with highest expression in skeletal muscle, heart and brain.

The protein localises to the cytoplasm. Substrate-recognition component of the SCF (SKP1-CUL1-F-box protein)-type E3 ubiquitin ligase complex. Role in neural transmission. This Rattus norvegicus (Rat) protein is F-box/LRR-repeat protein 20 (Fbxl20).